The following is a 352-amino-acid chain: C-C chemokine receptor type 5 (352 aa).

Topologically, residues 1–30 (MDYQVSSPTYDIDYYTSEPCQKVNVKQIAA) are extracellular. Residue Tyr3 is modified to Sulfotyrosine. 2 O-linked (GalNAc...) serine glycosylation sites follow: Ser6 and Ser7. Residues Tyr10, Tyr14, and Tyr15 each carry the sulfotyrosine modification. 2 disulfide bridges follow: Cys20-Cys269 and Cys101-Cys178. A helical membrane pass occupies residues 31-58 (RLLPPLYSLVFIFGFVGNILVVLILINC). Residues 59–68 (KRLKSMTDIY) are Cytoplasmic-facing. The chain crosses the membrane as a helical span at residues 69-89 (LLNLAISDLFFLLTVPFWAHY). The Extracellular portion of the chain corresponds to 90–102 (AAAQWDFGNTMCQ). Residues 103–124 (LLTGLYFIGFFSGIFFIILLTI) form a helical membrane-spanning segment. At 125–141 (DRYLAIVHAVFALKART) the chain is on the cytoplasmic side. Residues 142–166 (VTFGVVTSVITWVVAVFASLPGIIF) traverse the membrane as a helical segment. Over 167–198 (TRSQREGLHYTCSSHFPYSQYQFWKNFQTLKI) the chain is Extracellular. A helical membrane pass occupies residues 199–218 (VILGLVLPLLVMVICYSGIL). The Cytoplasmic portion of the chain corresponds to 219–235 (KTLLRCRNEKKRHRAVR). A helical transmembrane segment spans residues 236 to 260 (LIFTIMIVYFLFWAPYNIVLLLNTF). At 261–277 (QEFFGLNNCSSSNRLDQ) the chain is on the extracellular side. Residues 278–301 (AMQVTETLGMTHCCINPIIYAFVG) traverse the membrane as a helical segment. At 302 to 352 (EKFRNYLLVFFQKHIAKRFCKCCRIFQQEAPERASSVYTRSTGEQEISVGL) the chain is on the cytoplasmic side. S-palmitoyl cysteine attachment occurs at residues Cys321, Cys323, and Cys324. A phosphoserine; by BARK1 mark is found at Ser336, Ser337, Ser342, and Ser349.

Belongs to the G-protein coupled receptor 1 family. In terms of assembly, interacts with PRAF2. Efficient ligand binding to CCL3/MIP-1alpha and CCL4/MIP-1beta requires sulfation, O-glycosylation and sialic acid modifications. Glycosylation on Ser-6 is required for efficient binding of CCL4. Interacts with GRK2. Interacts with ARRB1 and ARRB2. Interacts with CNIH4. Interacts with S100A4; this interaction stimulates T-lymphocyte chemotaxis. Post-translationally, sulfated on at least 2 of the N-terminal tyrosines. Sulfation is required for efficient binding of the chemokines, CCL3 and CCL4. Palmitoylation in the C-terminal is important for cell surface expression. In terms of processing, phosphorylation on serine residues in the C-terminal is stimulated by binding CC chemokines especially by APO-RANTES. Post-translationally, O-glycosylated, but not N-glycosylated. Ser-6 appears to be the major site even if Ser-7 may be also O-glycosylated. Also sialylated glycans present which contribute to chemokine binding. Thr-16 and Ser-17 may also be glycosylated and, if so, with small moieties such as a T-antigen.

Its subcellular location is the cell membrane. Its function is as follows. Receptor for a number of inflammatory CC-chemokines including CCL3/MIP-1-alpha, CCL4/MIP-1-beta and RANTES and subsequently transduces a signal by increasing the intracellular calcium ion level. May play a role in the control of granulocytic lineage proliferation or differentiation. Participates in T-lymphocyte migration to the infection site by acting as a chemotactic receptor. The sequence is that of C-C chemokine receptor type 5 (CCR5) from Colobus polykomos (Western black-and-white colobus monkey).